The primary structure comprises 451 residues: UPF0210 protein APL_1491 (451 aa).

Belongs to the UPF0210 family. In terms of assembly, homodimer.

The chain is UPF0210 protein APL_1491 from Actinobacillus pleuropneumoniae serotype 5b (strain L20).